A 60-amino-acid chain; its full sequence is Metallothionein A (60 aa).

The tract at residues 1–28 (MDPCECSKSGNCNCGGSCTCTNCSCKSC) is beta. A divalent metal cation is bound by residues cysteine 4, cysteine 6, cysteine 12, cysteine 14, cysteine 18, cysteine 20, cysteine 23, cysteine 25, cysteine 28, cysteine 32, cysteine 33, cysteine 35, cysteine 36, cysteine 40, cysteine 43, cysteine 47, cysteine 49, cysteine 54, cysteine 58, and cysteine 59. Residues 29 to 60 (KKSCCPCCPSGCTKCASGCVCKGKTCDTSCCQ) are alpha.

It belongs to the metallothionein superfamily. Type 1 family.

In terms of biological role, metallothioneins have a high content of cysteine residues that bind various heavy metals. This chain is Metallothionein A (mta), found in Parachaenichthys charcoti (Charcot's dragonfish).